The following is a 261-amino-acid chain: Kynurenine formamidase (261 aa).

Position 9 is a phosphoserine (Ser-9). The short motif at 36-40 (HGGAW) is the HGGXW element. Ser-110 (nucleophile) is an active-site residue. Residues Asp-211 and His-243 contribute to the active site.

This sequence belongs to the kynurenine formamidase family. Homodimer.

The enzyme catalyses N-formyl-L-kynurenine + H2O = L-kynurenine + formate + H(+). It functions in the pathway amino-acid degradation; L-tryptophan degradation via kynurenine pathway; L-kynurenine from L-tryptophan: step 2/2. Catalyzes the hydrolysis of N-formyl-L-kynurenine to L-kynurenine, the second step in the kynurenine pathway of tryptophan degradation. Kynurenine may be further oxidized to nicotinic acid, NAD(H) and NADP(H). Required for elimination of toxic metabolites. The sequence is that of Kynurenine formamidase from Saccharomyces cerevisiae (strain ATCC 204508 / S288c) (Baker's yeast).